Here is a 189-residue protein sequence, read N- to C-terminus: MARLCAFLMVLPVLSYWPTCSLGCDLPQTHNLRNKRALTLLVKMRRLSPLSCLKDRKDFGFPQEKVGAQQIQEAQAIPVLSELTQQVLNIFTSKDSSAAWNATLLDSFCNEVHQQLNDLKACVMQQVGVQESPLTQEDSLLAVRKYFHRITVYLREKKHSPCAWEVVRAEVWRALSSSVNLLARLSKEE.

An N-terminal signal peptide occupies residues 1 to 23 (MARLCAFLMVLPVLSYWPTCSLG). 2 disulfide bridges follow: cysteine 24–cysteine 122 and cysteine 52–cysteine 162. The N-linked (GlcNAc...) asparagine glycan is linked to asparagine 101.

Belongs to the alpha/beta interferon family.

The protein localises to the secreted. Functionally, produced by macrophages, IFN-alpha have antiviral activities. Interferon stimulates the production of two enzymes: a protein kinase and an oligoadenylate synthetase. The protein is Interferon alpha-5 (Ifna5) of Mus musculus (Mouse).